Consider the following 427-residue polypeptide: Sperm-associated antigen 1A (427 aa).

The interval 46-113 (QKKGPGYREG…GPGSAGESCN (68 aa)) is disordered. TPR repeat units follow at residues 125–158 (LARL…CIEA), 167–200 (CVLY…HPFS), 202–234 (KPLL…DISV), 302–335 (FTIL…KPNE), 336–369 (CAIY…EPKN), and 371–403 (KAFY…DPNV).

The protein localises to the cytoplasm. Its subcellular location is the dynein axonemal particle. May play a role in the cytoplasmic assembly and/or trafficking of the axonemal dynein arms. This chain is Sperm-associated antigen 1A (spag1a), found in Danio rerio (Zebrafish).